A 337-amino-acid polypeptide reads, in one-letter code: MIEADRLIHPQIIDREEAEAVDRAMRPKMLDEYTGQDDTRAQLKIFIEAAQKRGEALDHMLIYGPPGLGKTTLAMIVANEMGVNIKSTSGPVLEKAGDLAALLTNLEPNDVLFIDEIHRLSPVVEEILYPAMEDYQLDIMIGEGPAARSIKLDLPPFTLVGATTRAGALTSPLRARFGIPLRLEFYNVKDLSSIVARSAKVMALEIDDEGAVEIARRSRGTPRIANRLLRRVRDFAEVKHSGDVTKVIAEAALDMLDVDAEGFDYMDRKLLLAIIDKFMGGPVGLDNLAAAIGEERETIEDVLEPFLIQQGFIQRTPRGRIATPRAYNHFNIIKPDA.

Positions 4-186 (ADRLIHPQII…FGIPLRLEFY (183 aa)) are large ATPase domain (RuvB-L). Residues arginine 26, glycine 67, lysine 70, threonine 71, threonine 72, 133–135 (EDY), arginine 176, tyrosine 186, and arginine 223 each bind ATP. Threonine 71 provides a ligand contact to Mg(2+). A small ATPAse domain (RuvB-S) region spans residues 187 to 257 (NVKDLSSIVA…IAEAALDMLD (71 aa)). The head domain (RuvB-H) stretch occupies residues 260–337 (AEGFDYMDRK…NHFNIIKPDA (78 aa)). DNA contacts are provided by arginine 296, arginine 315, and arginine 320.

Belongs to the RuvB family. Homohexamer. Forms an RuvA(8)-RuvB(12)-Holliday junction (HJ) complex. HJ DNA is sandwiched between 2 RuvA tetramers; dsDNA enters through RuvA and exits via RuvB. An RuvB hexamer assembles on each DNA strand where it exits the tetramer. Each RuvB hexamer is contacted by two RuvA subunits (via domain III) on 2 adjacent RuvB subunits; this complex drives branch migration. In the full resolvosome a probable DNA-RuvA(4)-RuvB(12)-RuvC(2) complex forms which resolves the HJ.

The protein resides in the cytoplasm. The enzyme catalyses ATP + H2O = ADP + phosphate + H(+). Functionally, the RuvA-RuvB-RuvC complex processes Holliday junction (HJ) DNA during genetic recombination and DNA repair, while the RuvA-RuvB complex plays an important role in the rescue of blocked DNA replication forks via replication fork reversal (RFR). RuvA specifically binds to HJ cruciform DNA, conferring on it an open structure. The RuvB hexamer acts as an ATP-dependent pump, pulling dsDNA into and through the RuvAB complex. RuvB forms 2 homohexamers on either side of HJ DNA bound by 1 or 2 RuvA tetramers; 4 subunits per hexamer contact DNA at a time. Coordinated motions by a converter formed by DNA-disengaged RuvB subunits stimulates ATP hydrolysis and nucleotide exchange. Immobilization of the converter enables RuvB to convert the ATP-contained energy into a lever motion, pulling 2 nucleotides of DNA out of the RuvA tetramer per ATP hydrolyzed, thus driving DNA branch migration. The RuvB motors rotate together with the DNA substrate, which together with the progressing nucleotide cycle form the mechanistic basis for DNA recombination by continuous HJ branch migration. Branch migration allows RuvC to scan DNA until it finds its consensus sequence, where it cleaves and resolves cruciform DNA. The protein is Holliday junction branch migration complex subunit RuvB of Shewanella halifaxensis (strain HAW-EB4).